The sequence spans 180 residues: Putative peroxiredoxin YkuU (180 aa).

A Thioredoxin domain is found at 4–165 (RMVGKQAPRF…TLRVLQALQT (162 aa)). Cys-52 functions as the Cysteine sulfenic acid (-SOH) intermediate in the catalytic mechanism.

The protein belongs to the peroxiredoxin family. AhpC/Prx1 subfamily. Homodimer; disulfide-linked, upon oxidation.

The protein resides in the cytoplasm. The enzyme catalyses a hydroperoxide + [protein]-dithiol = [protein]-disulfide + an alcohol + H2O. Functionally, thiol-specific peroxidase that catalyzes the reduction of hydrogen peroxide and organic hydroperoxides to water and alcohols, respectively. Plays a role in cell protection against oxidative stress by detoxifying peroxides. The protein is Putative peroxiredoxin YkuU (ykuU) of Bacillus subtilis (strain 168).